Consider the following 309-residue polypeptide: Glutaminase (309 aa).

The substrate site is built by Ser-64, Asn-114, Glu-160, Asn-167, Tyr-191, Tyr-243, and Val-261.

The protein belongs to the glutaminase family. In terms of assembly, homotetramer.

The enzyme catalyses L-glutamine + H2O = L-glutamate + NH4(+). The chain is Glutaminase from Rhizobium etli (strain CIAT 652).